Reading from the N-terminus, the 256-residue chain is tRNA pseudouridine synthase A 1 (256 aa).

The active-site Nucleophile is the aspartate 53. Tyrosine 111 provides a ligand contact to substrate.

The protein belongs to the tRNA pseudouridine synthase TruA family. Homodimer.

It catalyses the reaction uridine(38/39/40) in tRNA = pseudouridine(38/39/40) in tRNA. Formation of pseudouridine at positions 38, 39 and 40 in the anticodon stem and loop of transfer RNAs. The protein is tRNA pseudouridine synthase A 1 of Protochlamydia amoebophila (strain UWE25).